Reading from the N-terminus, the 169-residue chain is S-ribosylhomocysteine lyase (169 aa).

The Fe cation site is built by His-54, His-58, and Cys-129.

It belongs to the LuxS family. As to quaternary structure, homodimer. It depends on Fe cation as a cofactor.

The enzyme catalyses S-(5-deoxy-D-ribos-5-yl)-L-homocysteine = (S)-4,5-dihydroxypentane-2,3-dione + L-homocysteine. Involved in the synthesis of autoinducer 2 (AI-2) which is secreted by bacteria and is used to communicate both the cell density and the metabolic potential of the environment. The regulation of gene expression in response to changes in cell density is called quorum sensing. Catalyzes the transformation of S-ribosylhomocysteine (RHC) to homocysteine (HC) and 4,5-dihydroxy-2,3-pentadione (DPD). In Glaesserella parasuis serovar 5 (strain SH0165) (Haemophilus parasuis), this protein is S-ribosylhomocysteine lyase.